The primary structure comprises 298 residues: Hydroxymethylglutaryl-CoA lyase, mitochondrial (298 aa).

Residues V6 to M273 form the Pyruvate carboxyltransferase domain. Substrate is bound at residue R14. D15 provides a ligand contact to a divalent metal cation. K21 is subject to N6-acetyllysine. A divalent metal cation-binding residues include H206 and H208. C239 is a catalytic residue. N248 lines the a divalent metal cation pocket. Residues C296–L298 carry the Microbody targeting signal motif.

This sequence belongs to the HMG-CoA lyase family. In terms of assembly, homodimer; disulfide-linked. Can also form homotetramers.

It localises to the mitochondrion matrix. Its subcellular location is the peroxisome. The catalysed reaction is (3S)-3-hydroxy-3-methylglutaryl-CoA = acetoacetate + acetyl-CoA. It functions in the pathway metabolic intermediate metabolism; (S)-3-hydroxy-3-methylglutaryl-CoA degradation; acetoacetate from (S)-3-hydroxy-3-methylglutaryl-CoA: step 1/1. Its function is as follows. Mitochondrial 3-hydroxy-3-methylglutaryl-CoA lyase that catalyzes a cation-dependent cleavage of (S)-3-hydroxy-3-methylglutaryl-CoA into acetyl-CoA and acetoacetate, a key step in ketogenesis. Terminal step in leucine catabolism. Ketone bodies (beta-hydroxybutyrate, acetoacetate and acetone) are essential as an alternative source of energy to glucose, as lipid precursors and as regulators of metabolism. The sequence is that of Hydroxymethylglutaryl-CoA lyase, mitochondrial (HMGCL) from Gallus gallus (Chicken).